The chain runs to 113 residues: Pro-corazonin (113 aa).

The signal sequence occupies residues 1–19 (MATNITMFLIVITLTSVAA). Gln-20 carries the pyrrolidone carboxylic acid modification. Asparagine amide is present on Asn-30. The segment at 74 to 96 (LGPCDTSKTRSTTNPSDTNTSAV) is disordered. The segment covering 82-96 (TRSTTNPSDTNTSAV) has biased composition (polar residues).

Belongs to the corazonin family. In terms of tissue distribution, four pairs of lateral neurosecretory cells in the brains of late instar larvae, pupae and adults.

It localises to the secreted. In terms of biological role, cardioactive peptide. Corazonin is probably involved in the physiological regulation of the heart beat. This Galleria mellonella (Greater wax moth) protein is Pro-corazonin.